The sequence spans 458 residues: UDP-N-acetylglucosamine 1-carboxyvinyltransferase (458 aa).

22–23 lines the phosphoenolpyruvate pocket; sequence KN. Arginine 94 contributes to the UDP-N-acetyl-alpha-D-glucosamine binding site. The active-site Proton donor is aspartate 119. UDP-N-acetyl-alpha-D-glucosamine is bound by residues aspartate 309 and valine 331.

It belongs to the EPSP synthase family. MurA subfamily.

It is found in the cytoplasm. The enzyme catalyses phosphoenolpyruvate + UDP-N-acetyl-alpha-D-glucosamine = UDP-N-acetyl-3-O-(1-carboxyvinyl)-alpha-D-glucosamine + phosphate. It functions in the pathway cell wall biogenesis; peptidoglycan biosynthesis. In terms of biological role, cell wall formation. Adds enolpyruvyl to UDP-N-acetylglucosamine. This chain is UDP-N-acetylglucosamine 1-carboxyvinyltransferase, found in Chlamydia pneumoniae (Chlamydophila pneumoniae).